We begin with the raw amino-acid sequence, 155 residues long: MEIKVIENIEQFYRFFTDKAKVGYAMENNGEYQLKNNQLYVGVYEGLMLVGFFSIEFIRNKLIEVHPVFEPGFRGQYALAATKRFSNWLINNIHFSTVITYVPEKTPWGKVICQLMKMRKVGVIDNALTAGHHQINMTLYQVTKEELVNGWKQRR.

In Acyrthosiphon pisum secondary endosymbiont phage 1 (Bacteriophage APSE-1), this protein is Putative protein p31 (31).